The chain runs to 606 residues: Membrane protein insertase YidC (606 aa).

The helical transmembrane segment at 8-28 threads the bilayer; that stretch reads LILATALSFLVILVWFLLFPP. The span at 59 to 78 shows a compositional bias: low complexity; it reads TEAAPGAAPQTAATPTENAP. Residues 59-79 are disordered; that stretch reads TEAAPGAAPQTAATPTENAPR. A run of 4 helical transmembrane segments spans residues 378–398, 448–468, 506–526, and 542–562; these read MGVA…PLAW, LPIL…FVTI, SILA…SMWL, and IFAW…SGLI.

Belongs to the OXA1/ALB3/YidC family. Type 1 subfamily. In terms of assembly, interacts with the Sec translocase complex via SecD. Specifically interacts with transmembrane segments of nascent integral membrane proteins during membrane integration.

The protein localises to the cell inner membrane. In terms of biological role, required for the insertion and/or proper folding and/or complex formation of integral membrane proteins into the membrane. Involved in integration of membrane proteins that insert both dependently and independently of the Sec translocase complex, as well as at least some lipoproteins. Aids folding of multispanning membrane proteins. This Dinoroseobacter shibae (strain DSM 16493 / NCIMB 14021 / DFL 12) protein is Membrane protein insertase YidC.